The chain runs to 389 residues: P2X purinoceptor 4a (389 aa).

Over 1–36 (MSESVGCCDSVSQCFFDYYTSKILIIRSKKVGTLNR) the chain is Cytoplasmic. The helical transmembrane segment at 37–57 (FTQALVIAYVIGYVCVYNKGY) threads the bilayer. At 58-343 (QDTDTVLSSV…NIIPTLLNMG (286 aa)) the chain is on the extracellular side. Residues Lys70 and Lys72 each coordinate ATP. The CTP site is built by Lys70 and Lys72. Residues Asn78 and Asn113 are each glycosylated (N-linked (GlcNAc...) asparagine). 3 disulfides stabilise this stretch: Cys119–Cys168, Cys129–Cys152, and Cys135–Cys162. Arg143 provides a ligand contact to CTP. The N-linked (GlcNAc...) asparagine glycan is linked to Asn187. ATP-binding residues include Thr189 and Leu191. Thr189 serves as a coordination point for CTP. Asn213 carries N-linked (GlcNAc...) asparagine glycosylation. Cystine bridges form between Cys220-Cys230 and Cys264-Cys273. Residues Asn296, Arg298, and Lys316 each contribute to the ATP site. CTP contacts are provided by Asn296, Arg298, and Lys316. The helical transmembrane segment at 344–364 (AGLALLGLVNVICDWIVLTFM) threads the bilayer. The Cytoplasmic segment spans residues 365-389 (KRKQHYKEQKYTYVDDFGLLHNEDK).

The protein belongs to the P2X receptor family. Functional P2XRs are organized as homomeric and heteromeric trimers. Forms homotrimer.

It localises to the cell membrane. Its subcellular location is the lysosome membrane. The enzyme catalyses K(+)(in) = K(+)(out). It catalyses the reaction Na(+)(in) = Na(+)(out). The catalysed reaction is Ca(2+)(in) = Ca(2+)(out). With respect to regulation, activated by ATP. pH-dependent and inhibited by acidic pH. Its function is as follows. ATP-gated nonselective transmembrane cation channel permeable to potassium, sodium and calcium. CTP, but not GTP or UTP, functions as a weak affinity agonist for P2RX4. Activated by extracellularly released ATP, it plays multiple role in immunity and central nervous system physiology. Could also function as an ATP-gated cation channel of lysosomal membranes. The protein is P2X purinoceptor 4a (p2rx4a) of Danio rerio (Zebrafish).